The primary structure comprises 103 residues: Pilin (103 aa).

The first 30 residues, 1-30 (MYRFACRTLMLAACILATGVAGLGVGAQSA), serve as a signal peptide directing secretion. A compositionally biased stretch (basic and acidic residues) spans 61 to 76 (HDDFHRDSDGPDHSRD). The segment at 61-103 (HDDFHRDSDGPDHSRDYPGPILEGPVLDDPGAAPPPPAAGGGA) is disordered. Over residues 92–103 (AAPPPPAAGGGA) the composition is skewed to pro residues.

Belongs to the mycobacterial pilin family. Forms a homomer composed of subunits assembled in a large structure.

It is found in the fimbrium. In terms of biological role, structural subunit of pili, which are thin, flexible, coiled-coil, aggregative fibers. Mediates adhesion to the extracellular matrix, an event that would facilitate direct interaction with the host epithelium during infection in the lung or other tissues. The sequence is that of Pilin (mtp) from Mycobacterium bovis (strain ATCC BAA-935 / AF2122/97).